Here is a 146-residue protein sequence, read N- to C-terminus: Ribonuclease H (146 aa).

Residues 1–136 (MKHIEIYTDG…CDTLAREAAL (136 aa)) form the RNase H type-1 domain. D9, E47, D69, and D128 together coordinate Mg(2+).

It belongs to the RNase H family. Monomer. The cofactor is Mg(2+).

It localises to the cytoplasm. The catalysed reaction is Endonucleolytic cleavage to 5'-phosphomonoester.. Endonuclease that specifically degrades the RNA of RNA-DNA hybrids. This Campylobacter jejuni subsp. jejuni serotype O:23/36 (strain 81-176) protein is Ribonuclease H.